Reading from the N-terminus, the 248-residue chain is 5'-nucleotidase SurE (248 aa).

The a divalent metal cation site is built by Asp8, Asp9, Ser39, and Asn91.

It belongs to the SurE nucleotidase family. It depends on a divalent metal cation as a cofactor.

It is found in the cytoplasm. It catalyses the reaction a ribonucleoside 5'-phosphate + H2O = a ribonucleoside + phosphate. Nucleotidase that shows phosphatase activity on nucleoside 5'-monophosphates. This is 5'-nucleotidase SurE from Pseudoalteromonas atlantica (strain T6c / ATCC BAA-1087).